Here is a 776-residue protein sequence, read N- to C-terminus: Probable E3 ubiquitin-protein ligase HECTD2 (776 aa).

The tract at residues 1 to 46 (MSEAVRVPSPATPLVVAAPAPEERKGKESEREKLPPIVSAGAGATA) is disordered. Residues 7 to 20 (VPSPATPLVVAAPA) show a composition bias toward low complexity. Ser-9 carries the phosphoserine modification. Residues 21-34 (PEERKGKESEREKL) show a composition bias toward basic and acidic residues. Positions 437–776 (KRADLKKKLK…ISNSEGFGLE (340 aa)) constitute an HECT domain. The active-site Glycyl thioester intermediate is the Cys-744.

It catalyses the reaction S-ubiquitinyl-[E2 ubiquitin-conjugating enzyme]-L-cysteine + [acceptor protein]-L-lysine = [E2 ubiquitin-conjugating enzyme]-L-cysteine + N(6)-ubiquitinyl-[acceptor protein]-L-lysine.. It functions in the pathway protein modification; protein ubiquitination. In terms of biological role, E3 ubiquitin-protein ligase which accepts ubiquitin from an E2 ubiquitin-conjugating enzyme in the form of a thioester and then directly transfers the ubiquitin to targeted substrates. Its function is as follows. (Microbial infection) Catalyzes ubiquitination of Botulinum neurotoxin A light chain (LC) of C.botulinum neurotoxin type A (BoNT/A). This Homo sapiens (Human) protein is Probable E3 ubiquitin-protein ligase HECTD2.